The following is a 381-amino-acid chain: Ubiquitin-associated protein 1-like (381 aa).

The 47-residue stretch at 4-50 folds into the UMA domain; the sequence is LDGVPFKLPKGFVIGTEPLPGPELSVPACGEVLLGSMHDFSLERTAL. Disordered regions lie at residues 87–141 and 185–228; these read LAPA…PGRR and SLCP…LRSH. The span at 95 to 104 shows a compositional bias: basic and acidic residues; the sequence is RDPEAGHQER. A compositionally biased stretch (acidic residues) spans 105-123; the sequence is PEEEGEDEAEASSGSEEEP. Positions 124–141 are enriched in low complexity; sequence APSSLQPGSPASPGPGRR. A compositionally biased stretch (pro residues) spans 197 to 216; that stretch reads ASPPGPAPQHPAAPASPPRP.

This chain is Ubiquitin-associated protein 1-like (UBAP1L), found in Homo sapiens (Human).